A 660-amino-acid chain; its full sequence is Elongation factor 4 (660 aa).

One can recognise a tr-type G domain in the interval 55–241 (AQIRNFCIIA…EVVRQVPPPQ (187 aa)). GTP-binding positions include 67-72 (DHGKST) and 188-191 (NKID).

It belongs to the TRAFAC class translation factor GTPase superfamily. Classic translation factor GTPase family. LepA subfamily.

The protein resides in the cell membrane. It catalyses the reaction GTP + H2O = GDP + phosphate + H(+). In terms of biological role, required for accurate and efficient protein synthesis under certain stress conditions. May act as a fidelity factor of the translation reaction, by catalyzing a one-codon backward translocation of tRNAs on improperly translocated ribosomes. Back-translocation proceeds from a post-translocation (POST) complex to a pre-translocation (PRE) complex, thus giving elongation factor G a second chance to translocate the tRNAs correctly. Binds to ribosomes in a GTP-dependent manner. The polypeptide is Elongation factor 4 (Mycolicibacterium paratuberculosis (strain ATCC BAA-968 / K-10) (Mycobacterium paratuberculosis)).